Reading from the N-terminus, the 315-residue chain is Protoheme IX farnesyltransferase (315 aa).

Transmembrane regions (helical) follow at residues 32–52 (VMSLVVFTGLVGLVLAPGHMN), 53–73 (PVLAVISILCIAVGAGASGAL), 93–113 (IPAGIIAPNQVLAFGLTLSAF), 120–140 (LMVNWLAAALLAFTIFFYAVI), 153–173 (IVIGGAAGAFPPMIGWAAATG), 180–200 (LVLFMIIFLWTPPHFWALSLF), 226–246 (ALFYAVLMAPVGVLPWVMGFA), 249–269 (FYGVVSTLLGLAFVYYAWRLW), and 295–315 (IFAVLLFEALTFKLLAAFGVF).

It belongs to the UbiA prenyltransferase family. Protoheme IX farnesyltransferase subfamily.

The protein resides in the cell inner membrane. The enzyme catalyses heme b + (2E,6E)-farnesyl diphosphate + H2O = Fe(II)-heme o + diphosphate. It functions in the pathway porphyrin-containing compound metabolism; heme O biosynthesis; heme O from protoheme: step 1/1. Converts heme B (protoheme IX) to heme O by substitution of the vinyl group on carbon 2 of heme B porphyrin ring with a hydroxyethyl farnesyl side group. The chain is Protoheme IX farnesyltransferase from Brucella canis (strain ATCC 23365 / NCTC 10854 / RM-666).